The following is a 262-amino-acid chain: Phosphate import ATP-binding protein PstB (262 aa).

The region spanning 16–257 is the ABC transporter domain; sequence IDVRNLNFYY…PHRKETEDYI (242 aa). Residue 48 to 55 participates in ATP binding; it reads GPSGCGKS.

It belongs to the ABC transporter superfamily. Phosphate importer (TC 3.A.1.7) family. In terms of assembly, the complex is composed of two ATP-binding proteins (PstB), two transmembrane proteins (PstC and PstA) and a solute-binding protein (PstS).

Its subcellular location is the cell inner membrane. It carries out the reaction phosphate(out) + ATP + H2O = ADP + 2 phosphate(in) + H(+). Functionally, part of the ABC transporter complex PstSACB involved in phosphate import. Responsible for energy coupling to the transport system. This chain is Phosphate import ATP-binding protein PstB, found in Cupriavidus metallidurans (strain ATCC 43123 / DSM 2839 / NBRC 102507 / CH34) (Ralstonia metallidurans).